The primary structure comprises 364 residues: Mannose-1-phosphate guanyltransferase (364 aa).

Belongs to the transferase hexapeptide repeat family.

The protein resides in the cytoplasm. The enzyme catalyses alpha-D-mannose 1-phosphate + GTP + H(+) = GDP-alpha-D-mannose + diphosphate. It participates in nucleotide-sugar biosynthesis; GDP-alpha-D-mannose biosynthesis; GDP-alpha-D-mannose from alpha-D-mannose 1-phosphate (GTP route): step 1/1. In terms of biological role, involved in cell wall synthesis where it is required for glycosylation. Involved in cell cycle progression through cell-size checkpoint. The chain is Mannose-1-phosphate guanyltransferase (mpg1) from Aspergillus fumigatus (strain ATCC MYA-4609 / CBS 101355 / FGSC A1100 / Af293) (Neosartorya fumigata).